The chain runs to 194 residues: CASP-like protein 1B1 (194 aa).

The Cytoplasmic segment spans residues 1–24 (MASENGDKLELAFSAVPDPKPKKD). A helical transmembrane segment spans residues 25-45 (WVILSLRVVAFFATASATLVM). Over 46-77 (AFNKQTKGMVVATIGTNPVTITLTAMFQHTPA) the chain is Extracellular. Residues 78–98 (FIFFVIVNAIASFYNLLVIGV) traverse the membrane as a helical segment. The Cytoplasmic segment spans residues 99-111 (EILGPQYDYKGLR). Residues 112–132 (LGLIAILDVMTMALAATGDGA) traverse the membrane as a helical segment. Residues 133–164 (ATFMAELGRNGNSHARWDKICDKFEAYCNRGG) are Extracellular-facing. A helical membrane pass occupies residues 165-185 (VALVASFVGLILLLVVTVMSI). Topologically, residues 186–194 (TKLLKLNRI) are cytoplasmic.

Belongs to the Casparian strip membrane proteins (CASP) family. In terms of assembly, homodimer and heterodimers.

The protein localises to the cell membrane. In Glycine max (Soybean), this protein is CASP-like protein 1B1.